The chain runs to 200 residues: Holliday junction branch migration complex subunit RuvA (200 aa).

The segment at 1-64 (MIGHLRGIIV…EDAHTLYGFH (64 aa)) is domain I. Positions 65–143 (NDHERRLFRA…RWHTNDTPSP (79 aa)) are domain II. The interval 133–152 (SRWHTNDTPSPEGLRSSNTQ) is disordered. The segment at 144–148 (EGLRS) is flexible linker. The tract at residues 149-200 (SNTQPTQDAISALMALGYKPQEAKRAIDAIQKPDLSAETLIRLALKQMVLGT) is domain III.

The protein belongs to the RuvA family. As to quaternary structure, homotetramer. Forms an RuvA(8)-RuvB(12)-Holliday junction (HJ) complex. HJ DNA is sandwiched between 2 RuvA tetramers; dsDNA enters through RuvA and exits via RuvB. An RuvB hexamer assembles on each DNA strand where it exits the tetramer. Each RuvB hexamer is contacted by two RuvA subunits (via domain III) on 2 adjacent RuvB subunits; this complex drives branch migration. In the full resolvosome a probable DNA-RuvA(4)-RuvB(12)-RuvC(2) complex forms which resolves the HJ.

Its subcellular location is the cytoplasm. Its function is as follows. The RuvA-RuvB-RuvC complex processes Holliday junction (HJ) DNA during genetic recombination and DNA repair, while the RuvA-RuvB complex plays an important role in the rescue of blocked DNA replication forks via replication fork reversal (RFR). RuvA specifically binds to HJ cruciform DNA, conferring on it an open structure. The RuvB hexamer acts as an ATP-dependent pump, pulling dsDNA into and through the RuvAB complex. HJ branch migration allows RuvC to scan DNA until it finds its consensus sequence, where it cleaves and resolves the cruciform DNA. This is Holliday junction branch migration complex subunit RuvA from Coxiella burnetii (strain CbuK_Q154) (Coxiella burnetii (strain Q154)).